Reading from the N-terminus, the 513-residue chain is ATP synthase subunit alpha (513 aa).

An ATP-binding site is contributed by 169–176 (GDRQTGKT).

This sequence belongs to the ATPase alpha/beta chains family. As to quaternary structure, F-type ATPases have 2 components, CF(1) - the catalytic core - and CF(0) - the membrane proton channel. CF(1) has five subunits: alpha(3), beta(3), gamma(1), delta(1), epsilon(1). CF(0) has three main subunits: a(1), b(2) and c(9-12). The alpha and beta chains form an alternating ring which encloses part of the gamma chain. CF(1) is attached to CF(0) by a central stalk formed by the gamma and epsilon chains, while a peripheral stalk is formed by the delta and b chains.

The protein resides in the cell inner membrane. It carries out the reaction ATP + H2O + 4 H(+)(in) = ADP + phosphate + 5 H(+)(out). Its function is as follows. Produces ATP from ADP in the presence of a proton gradient across the membrane. The alpha chain is a regulatory subunit. The polypeptide is ATP synthase subunit alpha (Dichelobacter nodosus (strain VCS1703A)).